A 332-amino-acid chain; its full sequence is 4-hydroxy-3-methylbut-2-enyl diphosphate reductase (332 aa).

[4Fe-4S] cluster is bound at residue Cys-13. Residues His-41 and His-75 each contribute to the (2E)-4-hydroxy-3-methylbut-2-enyl diphosphate site. Dimethylallyl diphosphate is bound by residues His-41 and His-75. Residues His-41 and His-75 each coordinate isopentenyl diphosphate. [4Fe-4S] cluster is bound at residue Cys-97. His-125 lines the (2E)-4-hydroxy-3-methylbut-2-enyl diphosphate pocket. Dimethylallyl diphosphate is bound at residue His-125. His-125 is a binding site for isopentenyl diphosphate. The active-site Proton donor is Glu-127. Residue Thr-168 coordinates (2E)-4-hydroxy-3-methylbut-2-enyl diphosphate. Cys-229 contacts [4Fe-4S] cluster. (2E)-4-hydroxy-3-methylbut-2-enyl diphosphate contacts are provided by Ser-257, Ser-258, Asn-259, and Ser-306. Dimethylallyl diphosphate-binding residues include Ser-257, Ser-258, Asn-259, and Ser-306. Isopentenyl diphosphate contacts are provided by Ser-257, Ser-258, Asn-259, and Ser-306.

It belongs to the IspH family. It depends on [4Fe-4S] cluster as a cofactor.

It carries out the reaction isopentenyl diphosphate + 2 oxidized [2Fe-2S]-[ferredoxin] + H2O = (2E)-4-hydroxy-3-methylbut-2-enyl diphosphate + 2 reduced [2Fe-2S]-[ferredoxin] + 2 H(+). It catalyses the reaction dimethylallyl diphosphate + 2 oxidized [2Fe-2S]-[ferredoxin] + H2O = (2E)-4-hydroxy-3-methylbut-2-enyl diphosphate + 2 reduced [2Fe-2S]-[ferredoxin] + 2 H(+). The protein operates within isoprenoid biosynthesis; dimethylallyl diphosphate biosynthesis; dimethylallyl diphosphate from (2E)-4-hydroxy-3-methylbutenyl diphosphate: step 1/1. Its pathway is isoprenoid biosynthesis; isopentenyl diphosphate biosynthesis via DXP pathway; isopentenyl diphosphate from 1-deoxy-D-xylulose 5-phosphate: step 6/6. Its function is as follows. Catalyzes the conversion of 1-hydroxy-2-methyl-2-(E)-butenyl 4-diphosphate (HMBPP) into a mixture of isopentenyl diphosphate (IPP) and dimethylallyl diphosphate (DMAPP). Acts in the terminal step of the DOXP/MEP pathway for isoprenoid precursor biosynthesis. The chain is 4-hydroxy-3-methylbut-2-enyl diphosphate reductase from Chlorobaculum tepidum (strain ATCC 49652 / DSM 12025 / NBRC 103806 / TLS) (Chlorobium tepidum).